Consider the following 660-residue polypeptide: Replication restart protein PriA (660 aa).

A Helicase ATP-binding domain is found at 145 to 313 (IIGSEKTNVF…KNNQIKKIIM (169 aa)). Position 158–165 (158–165 (GIPGSGKT)) interacts with ATP. The DEAH box signature appears at 256-259 (DEEH). Residues C370, C373, C379, C382, C397, C400, C410, and C413 each contribute to the Zn(2+) site. The Helicase C-terminal domain occupies 405-557 (KTASHCPQCE…QFYEEELDIR (153 aa)).

It belongs to the helicase family. PriA subfamily. In terms of assembly, component of the replication restart primosome. Zn(2+) is required as a cofactor.

The enzyme catalyses Couples ATP hydrolysis with the unwinding of duplex DNA by translocating in the 3'-5' direction.. It carries out the reaction ATP + H2O = ADP + phosphate + H(+). Initiates the restart of stalled replication forks, which reloads the replicative helicase on sites other than the origin of replication. Recognizes and binds to abandoned replication forks and remodels them to uncover a helicase loading site. Promotes assembly of the primosome at these replication forks. The polypeptide is Replication restart protein PriA (Borreliella burgdorferi (strain ATCC 35210 / DSM 4680 / CIP 102532 / B31) (Borrelia burgdorferi)).